Consider the following 523-residue polypeptide: MAMASLARRKAYAVVSSSRSSVFLTSLRGFASGSDENDVVVIGGGPGGYVAAIKASQLGLKTTCIEKRGTLGGTCLNVGCIPSKALLHSSHMYHEAKHSFANHGIKLSSVEVDLAGMMAQKDKAVSNLTKGIEGLFKKNKVNYVKGYGKFVSPSEVSVDTIDGGNTVVKGKHIIIATGSDVKSLPGVTIDEKKIVSSTGALALTEIPKKLVVIGAGYIGLEMGSVWGRLGSEVTVVEFASDIVPTMDAEVRKQFQRSLEKQGMKFQLKTKVVGVDTSGDGVKLTLEPAAGGDQTILETDVVLVSAGRTPFTAGLGLDKIGVETDKIRRILVNERFTTNVSGVYAIGDVIPGPMLAHKAEEDGVACVEFIAGKVGHVDYDKVPGVVYTTPEVAYVGKTEEQVKALGVEYRVGKFPFMANSRAKAIDNAEGLVKILAEKETDKILGVHIMAPNAGELIHEAAIALQYDASSEDIARVCHAHPTMSEAVKEAAMATYDKPHSHMKSWLLLHSLLFIFVQQFTMTWR.

Residues 1 to 30 constitute a mitochondrion transit peptide; that stretch reads MAMASLARRKAYAVVSSSRSSVFLTSLRGF. FAD is bound by residues 66–75, lysine 84, glycine 148, and 177–179; these read EKRGTLGGTC and TGS. The cysteines at positions 75 and 80 are disulfide-linked. NAD(+) contacts are provided by residues 214–221, glutamate 237, valine 271, and glycine 306; that span reads GAGYIGLE. FAD is bound by residues aspartate 347 and 353–356; that span reads MLAH. Histidine 479 serves as the catalytic Proton acceptor.

It belongs to the class-I pyridine nucleotide-disulfide oxidoreductase family. Homodimer. FAD serves as cofactor.

The protein localises to the mitochondrion. The enzyme catalyses 2 Fe(III)-[leghemoglobin] + NADH = 2 Fe(II)-[leghemoglobin] + NAD(+) + H(+). It catalyses the reaction 2 Fe(III)-[leghemoglobin] + NADPH = 2 Fe(II)-[leghemoglobin] + NADP(+) + H(+). Reduces ferric leghemoglobin (Lb) to ferrous Lb. The sequence is that of Leghemoglobin reductase (FLBR) from Vigna unguiculata (Cowpea).